A 421-amino-acid chain; its full sequence is uncharacterized protein (421 aa).

It belongs to the glycosyltransferase 28 family.

This is an uncharacterized protein from Mycobacterium leprae (strain TN).